The following is a 122-amino-acid chain: Large ribosomal subunit protein uL14 (122 aa).

This sequence belongs to the universal ribosomal protein uL14 family. As to quaternary structure, part of the 50S ribosomal subunit. Forms a cluster with proteins L3 and L19. In the 70S ribosome, L14 and L19 interact and together make contacts with the 16S rRNA in bridges B5 and B8.

In terms of biological role, binds to 23S rRNA. Forms part of two intersubunit bridges in the 70S ribosome. The sequence is that of Large ribosomal subunit protein uL14 from Orientia tsutsugamushi (strain Ikeda) (Rickettsia tsutsugamushi).